We begin with the raw amino-acid sequence, 149 residues long: Thioredoxin-like protein 4B (149 aa).

The protein belongs to the DIM1 family. Homodimer. Interacts with the U5-102 kDa protein subunit of the spliceosome.

The protein resides in the nucleus. Functionally, essential role in pre-mRNA splicing. Required in cell cycle progression for S/G(2) transition. The protein is Thioredoxin-like protein 4B (Txnl4b) of Mus musculus (Mouse).